A 113-amino-acid polypeptide reads, in one-letter code: Carboxysome shell protein CcmK4 (113 aa).

Residues 5-91 enclose the BMC domain; that stretch reads AIGSLETKGF…PHENVEAVFP (87 aa).

The protein belongs to the bacterial microcompartments protein family. CcmK subfamily. Homohexamer. Interacts stably with CcmK3, probably forms heterohexamers with a 1:2 CcmK3:CcmK4 stoichiometry.

It is found in the carboxysome. One of the shell proteins of the carboxysome, a polyhedral inclusion where RuBisCO (ribulose bisphosphate carboxylase, rbcL-rbcS) is sequestered. Assembles into hexamers which make sheets that form the facets of the polyhedral carboxysome. The hexamer central pore probably regulates metabolite flux. Its function is as follows. A minor shell protein of the carboxysome, a polyhedral inclusion where RuBisCO (ribulose bisphosphate carboxylase, rbcL-rbcS) is sequestered. Hexamers form sheets that form the facets of the polyhedral carboxysome. The shell is 4.5 nm thick, as observed for CcmK proteins. In PCC 7942 there are several CcmK paralogs with presumably functional differences; replacing the central pore residues (34-37) with those of CcmK2 from this organism (Tyr-Glu-Lys-Ile) allows the bacterium to make carboxysomes, but the expression level is too low to know if the carboxysome is functional for CO(2) fixation. This subunit probably makes both homohexamers and heterohexamers with CcmK3. The CcmK3-CcmK4 heterohexmers have been suggested to cap other hexamers, perhaps to alter metabolite flux. In Synechococcus elongatus (strain ATCC 33912 / PCC 7942 / FACHB-805) (Anacystis nidulans R2), this protein is Carboxysome shell protein CcmK4.